The chain runs to 414 residues: Aspartic protease-like protein pynH (414 aa).

An N-terminal signal peptide occupies residues 1–19; it reads MFPCSRIWSLLVAAATASA. A Peptidase A1 domain is found at 43 to 410; that stretch reads FLTDIALGTP…DFEKLQVGIA (368 aa). N-linked (GlcNAc...) asparagine glycosylation is found at N93, N102, N140, N151, N173, N202, N221, N258, N272, N335, and N366. C333 and C371 are joined by a disulfide.

It belongs to the peptidase A1 family.

It functions in the pathway secondary metabolite biosynthesis. Functionally, aspartic protease-like protein; part of the gene cluster that mediates the biosynthesis of pyranonigrins, a family of antioxidative compounds. The first step of pyranonigrins biosynthesis is performed by the hybrid PKS-NRPS synthetase that condenses 6 malonyl-CoA units to an acetyl starter unit, to form a 1,3,5-trioxotetradecane-6,8-dienyl-ACP. The enoyl reductase (ER) domain of pynA is likely to be functional during the first two rounds of polyketide chain extension, to generate the saturated C-C bonds of the alkyl side chain. PynA subsequently forms the amide bond between the acyl chain and L-serine. Although pynA has a terminal reductase domain, it appears to require the thioesterase pynI for the release of the straight-chain intermediate from pynA via the formation of a tetramic acid pyranonigrin J. The methyltransferase pynC then coverts pyranonigrin J to pyranonigrin I via N-methylation. The FAD-dependent monooxygenase pynG catalyzes an epoxidation-mediated cyclization to form the dihydro-gamma-pyrone moiety, followed by pynD-catalyzed oxidation of the alcohol to the ketone and enolization to yield the characteristic tetramic acid-fused gamma-pyrone core of pyranonigrin H. Pyranonigrin H is substrate of pynH for dehydration-mediated exo-methylene formation from the serine side chain to produce pyranonigrin E, before the oxidase pynE reduces the exo-methylene of pyranonigrin E into a pendant methyl to form pyranonigrin G. The FAD-linked oxidoreductase pynB performs the reverse reaction and converts pyranonigrin G back to pyranonigrin E. The sequence is that of Aspartic protease-like protein pynH from Aspergillus niger (strain ATCC MYA-4892 / CBS 513.88 / FGSC A1513).